Consider the following 93-residue polypeptide: Pyrimidine/purine nucleoside phosphorylase (93 aa).

Belongs to the nucleoside phosphorylase PpnP family.

The catalysed reaction is a purine D-ribonucleoside + phosphate = a purine nucleobase + alpha-D-ribose 1-phosphate. The enzyme catalyses adenosine + phosphate = alpha-D-ribose 1-phosphate + adenine. It catalyses the reaction cytidine + phosphate = cytosine + alpha-D-ribose 1-phosphate. It carries out the reaction guanosine + phosphate = alpha-D-ribose 1-phosphate + guanine. The catalysed reaction is inosine + phosphate = alpha-D-ribose 1-phosphate + hypoxanthine. The enzyme catalyses thymidine + phosphate = 2-deoxy-alpha-D-ribose 1-phosphate + thymine. It catalyses the reaction uridine + phosphate = alpha-D-ribose 1-phosphate + uracil. It carries out the reaction xanthosine + phosphate = alpha-D-ribose 1-phosphate + xanthine. Catalyzes the phosphorolysis of diverse nucleosides, yielding D-ribose 1-phosphate and the respective free bases. Can use uridine, adenosine, guanosine, cytidine, thymidine, inosine and xanthosine as substrates. Also catalyzes the reverse reactions. This is Pyrimidine/purine nucleoside phosphorylase from Photobacterium profundum (strain SS9).